The following is a 282-amino-acid chain: L-allo-isoleucyltransferase (282 aa).

Residue Cys105 is the Acyl-thioester intermediate of the active site. The 93-residue stretch at 169–261 (HTQSTYTPSD…DGQHHDFVDG (93 aa)) folds into the AB hydrolase-1 domain.

This sequence belongs to the AB hydrolase superfamily.

The catalysed reaction is holo-[CmaD peptidyl-carrier protein] + L-alloisoleucyl-[CmaA peptidyl-carrier protein] = L-alloisoleucyl-[CmaD peptidyl-carrier protein] + holo-[CmaA peptidyl-carrier protein]. Involved in the biosynthesis of the phytotoxin coronatine (COR). Catalyzes the transfer of the aminoacyl group covalently attached to the pantetheinyl arm of CmaA to the holo-pantetheinyl arm of CmaD. During the shuttling process, CmaE generates a covalent-aminoacyl-S-Cys enzyme intermediate by the action of its donor substrate L-aminoacyl-S-CmaA and delivers it to the sulfhydryl group attached to the phosphopantetheinyl arm on CmaD. The protein is L-allo-isoleucyltransferase of Pseudomonas savastanoi pv. glycinea (Pseudomonas syringae pv. glycinea).